The chain runs to 424 residues: Histidine--tRNA ligase (424 aa).

Belongs to the class-II aminoacyl-tRNA synthetase family. Homodimer.

The protein localises to the cytoplasm. The catalysed reaction is tRNA(His) + L-histidine + ATP = L-histidyl-tRNA(His) + AMP + diphosphate + H(+). The polypeptide is Histidine--tRNA ligase (Shigella dysenteriae serotype 1 (strain Sd197)).